The chain runs to 473 residues: GTPase Der (473 aa).

2 EngA-type G domains span residues 3-167 (FTVA…GEDR) and 203-378 (LRVA…KVWN). Residues 9 to 16 (GRPNVGKS), 56 to 60 (DTAGL), 119 to 122 (NKSE), 209 to 216 (GRPNAGKS), 256 to 260 (DTAGM), and 321 to 324 (NKWD) contribute to the GTP site. The KH-like domain maps to 379 to 463 (KRISTARLNR…PIRIHFRSPD (85 aa)).

It belongs to the TRAFAC class TrmE-Era-EngA-EngB-Septin-like GTPase superfamily. EngA (Der) GTPase family. In terms of assembly, associates with the 50S ribosomal subunit.

Its function is as follows. GTPase that plays an essential role in the late steps of ribosome biogenesis. The polypeptide is GTPase Der (Rhizobium johnstonii (strain DSM 114642 / LMG 32736 / 3841) (Rhizobium leguminosarum bv. viciae)).